Reading from the N-terminus, the 305-residue chain is MGDETIKVAILGSGNIGTDLMYKLLDCPASMELVLLAGIDPNSEGLARARALGVAASAQGIDAVLEHPDIQIVFDATSAKAHVRHAKLLRETGRTAIDLTPAARGPYVVPPVNLRQHLDAPNVNLITCGGQATIPLVYAVSRVTPVRYAEIVSTVASRSAGPGTRQNIDEFTFTTAHGLEVIGGAQQGKAIIILNPAEPPILMRNTVYALPEDDFDPAQVRDSIEAMVAEVQQYVPGYRLKNPPVFDMRDTPWGRKSAVTVLLEVEGAGHFLPTYAGNLDIMTASARRVGDVFARHLLSRREVAV.

13 to 16 (SGNI) is a binding site for NAD(+). C128 acts as the Acyl-thioester intermediate in catalysis. Residues 159 to 167 (SAGPGTRQN) and N278 each bind NAD(+).

It belongs to the acetaldehyde dehydrogenase family.

It catalyses the reaction acetaldehyde + NAD(+) + CoA = acetyl-CoA + NADH + H(+). This chain is Acetaldehyde dehydrogenase, found in Roseiflexus castenholzii (strain DSM 13941 / HLO8).